The following is a 92-amino-acid chain: MPRSLKKGPFIDLHLLKKVEKAMEAGDKKPIKTWSRRSMIIPNMIGMTIAVHNGRQHVPVFVTDEMIGHKLGEFSPTRTYRGHAADKKAKKR.

It belongs to the universal ribosomal protein uS19 family.

Functionally, protein S19 forms a complex with S13 that binds strongly to the 16S ribosomal RNA. This is Small ribosomal subunit protein uS19 from Shewanella halifaxensis (strain HAW-EB4).